Consider the following 2212-residue polypeptide: RNA-directed RNA polymerase L (2212 aa).

The segment at 30 to 288 (KDALLSQVHP…SHEENDSLDC (259 aa)) is endonuclease. Residues glutamate 55, aspartate 93, and glutamate 106 each contribute to the Mn(2+) site. Lysine 119 is a catalytic residue. The tract at residues 922–942 (MKSSDAREERLQDPKRNEKNA) is disordered. Residues 923–942 (KSSDAREERLQDPKRNEKNA) show a composition bias toward basic and acidic residues. The 197-residue stretch at 1175–1371 (CDMKMAVNNG…YLSSKLNKFV (197 aa)) folds into the RdRp catalytic domain. Position 1333 (aspartate 1333) interacts with Mg(2+).

Belongs to the Bunyavirales RNA polymerase family. In terms of assembly, homomultimer; the oligomeric structure is essential for the polymerase activity. Interacts with nucleoprotein N. Interacts with protein Z; this interaction inhibits viral transcription and replication, Z partially blocks the product exit tunnel for the releasing nascent RNA product. Requires Mn(2+) as cofactor. The cofactor is Mg(2+).

It localises to the virion. The protein resides in the host cytoplasm. The enzyme catalyses RNA(n) + a ribonucleoside 5'-triphosphate = RNA(n+1) + diphosphate. Its function is as follows. RNA-dependent RNA polymerase, which is responsible for the replication and transcription of the viral RNA genome using antigenomic RNA as an intermediate. During transcription, synthesizes subgenomic RNAs and assures their capping by a cap-snatching mechanism, which involves the endonuclease activity cleaving the host capped pre-mRNAs. These short capped RNAs are then used as primers for viral transcription. The 3'-end of subgenomic mRNAs molecules are heterogeneous and not polyadenylated. The replicase function is to direct synthesis of antigenomic and genomic RNA which are encapsidated and non capped. As a consequence of the use of the same enzyme for both transcription and replication, these mechanisms need to be well coordinated. These processes may be regulated by proteins N and Z in a dose-dependent manner. Z protein inhibits the viral polymerase L und thus the viral transcription and RNA synthesis. This Sabia mammarenavirus (isolate Human/Brasil/SPH114202/1990) (SABV) protein is RNA-directed RNA polymerase L.